The chain runs to 875 residues: Serrate RNA effector molecule homolog (875 aa).

The disordered stretch occupies residues 1-90 (MGDSDDEYDR…RRDWDEHSSD (90 aa)). Glycine 2 carries the N-acetylglycine modification. Serine 4 carries the phosphoserine modification. Tyrosine 8 carries the phosphotyrosine modification. Basic and acidic residues predominate over residues 8 to 73 (YDRRRRDKFR…ERFSPPRHEL (66 aa)). Residues serine 67, serine 74, and serine 136 each carry the phosphoserine modification. Residue lysine 150 forms a Glycyl lysine isopeptide (Lys-Gly) (interchain with G-Cter in SUMO2) linkage. A disordered region spans residues 272–411 (EEEEQAGKTG…KPKDAAGLEC (140 aa)). Over residues 297–345 (EGERKANDKDEKKEDGKQAENDSSNDDKTKKSEGDGDKEEKKEEAEKEA) the composition is skewed to basic and acidic residues. A compositionally biased stretch (acidic residues) spans 369-386 (SESESEGGQAEEEKEEAE). A compositionally biased stretch (basic and acidic residues) spans 387–411 (EALKEKEKPKEEEKEKPKDAAGLEC). Phosphoserine occurs at positions 492 and 539. Residue threonine 543 is modified to Phosphothreonine. The residue at position 569 (serine 569) is a Phosphoserine. The tract at residues 571 to 597 (EEEELLGSSGGPPPEEPPKEGNPAEIN) is disordered. Phosphothreonine is present on threonine 670. Phosphoserine is present on serine 678. Omega-N-methylarginine occurs at positions 832, 839, and 849. The disordered stretch occupies residues 834–853 (NYDAFRGQGGYPGKPRNRMV).

Belongs to the ARS2 family. In terms of assembly, interacts with CASP8AP2 and ERBB4. Interacts with NCBP1/CBP80 and DROSHA. Interacts with LUZP4. Interacts with NCBP2/CBP20 and NCBP3. Interacts with MTREX. As to expression, widely expressed, with a preference for proliferating cells. Highly expressed in hematopoietic tissues and reduced or absent expression in parenchymal organs like liver and kidney. In the brain, expressed in the subventricular zone by niche astrocytes, ependymal cells and neural stem cells. In this cerebral context, expressed in slowly dividing cells.

It localises to the nucleus. The protein localises to the nucleoplasm. The protein resides in the cytoplasm. In terms of biological role, acts as a mediator between the cap-binding complex (CBC) and the primary microRNAs (miRNAs) processing machinery during cell proliferation. Contributes to the stability and delivery of capped primary miRNA transcripts to the primary miRNA processing complex containing DGCR8 and DROSHA, thereby playing a role in RNA-mediated gene silencing (RNAi) by miRNAs. Binds capped RNAs (m7GpppG-capped RNA); however interaction is probably mediated via its interaction with NCBP1/CBP80 component of the CBC complex. Involved in cell cycle progression at S phase. Does not directly confer arsenite resistance but rather modulates arsenic sensitivity. Independently of its activity on miRNAs, necessary and sufficient to promote neural stem cell self-renewal. Does so by directly binding SOX2 promoter and positively regulating its transcription. The chain is Serrate RNA effector molecule homolog (Srrt) from Mus musculus (Mouse).